A 197-amino-acid chain; its full sequence is Holliday junction branch migration complex subunit RuvA (197 aa).

The segment at 1 to 65 is domain I; that stretch reads MISQVRGTIM…EDAWHLYGFA (65 aa). A domain II region spans residues 66–140; it reads HAYERAVFQK…DKIDAVGPAP (75 aa). Residues 140–144 are flexible linker; it reads PATGT. Residues 145–197 are domain III; it reads APSPLGDDAVRALIALGYNQTEADRAVRAVVESGAPKDVSSLVRGALSRLTAK.

It belongs to the RuvA family. In terms of assembly, homotetramer. Forms an RuvA(8)-RuvB(12)-Holliday junction (HJ) complex. HJ DNA is sandwiched between 2 RuvA tetramers; dsDNA enters through RuvA and exits via RuvB. An RuvB hexamer assembles on each DNA strand where it exits the tetramer. Each RuvB hexamer is contacted by two RuvA subunits (via domain III) on 2 adjacent RuvB subunits; this complex drives branch migration. In the full resolvosome a probable DNA-RuvA(4)-RuvB(12)-RuvC(2) complex forms which resolves the HJ.

The protein resides in the cytoplasm. Its function is as follows. The RuvA-RuvB-RuvC complex processes Holliday junction (HJ) DNA during genetic recombination and DNA repair, while the RuvA-RuvB complex plays an important role in the rescue of blocked DNA replication forks via replication fork reversal (RFR). RuvA specifically binds to HJ cruciform DNA, conferring on it an open structure. The RuvB hexamer acts as an ATP-dependent pump, pulling dsDNA into and through the RuvAB complex. HJ branch migration allows RuvC to scan DNA until it finds its consensus sequence, where it cleaves and resolves the cruciform DNA. This Gemmatimonas aurantiaca (strain DSM 14586 / JCM 11422 / NBRC 100505 / T-27) protein is Holliday junction branch migration complex subunit RuvA.